The chain runs to 191 residues: Probable GTP-binding protein EngB (191 aa).

Positions 22 to 190 (RLPEIAFLGR…WQAITTTLQA (169 aa)) constitute an EngB-type G domain. GTP contacts are provided by residues 30 to 37 (GRSNVGKS), 57 to 61 (GRTQT), 75 to 78 (DLPG), 142 to 145 (TKTD), and 169 to 171 (FSA). Positions 37 and 59 each coordinate Mg(2+).

This sequence belongs to the TRAFAC class TrmE-Era-EngA-EngB-Septin-like GTPase superfamily. EngB GTPase family. Mg(2+) is required as a cofactor.

In terms of biological role, necessary for normal cell division and for the maintenance of normal septation. This chain is Probable GTP-binding protein EngB, found in Solibacter usitatus (strain Ellin6076).